The following is a 559-amino-acid chain: Podocan-like protein 1 (559 aa).

The N-terminal stretch at 1–20 is a signal peptide; it reads MRPQELLLLLLMLKWSLAHT. Asn-64 carries an N-linked (GlcNAc...) asparagine glycan. LRR repeat units lie at residues 66–89, 90–115, 117–139, 140–160, 161–186, 188–208, 209–231, 233–257, 258–281, 283–302, 303–328, 329–352, 354–373, 374–399, 400–423, 425–444, 445–470, 471–494, 496–515, and 517–541; these read TRAARHLSLQNNQLRELPYNELSR, LSGLRTLDLHSNLITSEGLPDEAFES, NQLENFYVAHNKLSVAPQFLPRS, LRVADLAANEVVEIFPLTFGE, KPALRSVYLHNNRLRNTGLPPNTFHG, EVITTLSLSSNQLSYLPPSLP, ASLERLHLQNNLISKVPRGALSL, THLRELYLQHNQLTDSGLDATTFSK, LSSLEYLDLSHNQLATVPEGLPGT, TILHLGRNCIRHVEAVRLHK, ARGLRYLLLQHNKLGASALPKGTLRP, LRALHTLHLYGNKLERVPPALPRH, QALVMPHNHVAALGARDLVS, ARALAELNLAYNSLASAHVHPSAFRR, LRALRSLDLAGNQLTRLPEGLPAS, RSLRLQRNQLRTLEPEQLAG, LNKLRELNLAHNRLRVGDIGPGTWHE, LQALKVLDLSHNELSFVPPDLPEA, EELYLQANRISHVGPEAFLS, and PHLRALFLRANRLHMTSIRAEALQG.

This sequence belongs to the small leucine-rich proteoglycan (SLRP) family. SLRP class V subfamily. N-glycosylated. Detected in bone where it is expressed in osteoblasts and newly formed bone matrix (at protein level). Also expressed weakly in osteoclasts (at protein level). Expressed strongly in calvaria, lung and femur, and weakly in kidney.

The protein localises to the secreted. Its subcellular location is the extracellular space. The protein resides in the extracellular matrix. The protein is Podocan-like protein 1 of Mus musculus (Mouse).